Reading from the N-terminus, the 127-residue chain is Small ribosomal subunit protein uS13 (127 aa).

The disordered stretch occupies residues 93-127 (RQGLPVRGQRTRTNGRTRRGRRVTVAGKKKAPAKK). A compositionally biased stretch (basic residues) spans 101-127 (QRTRTNGRTRRGRRVTVAGKKKAPAKK).

This sequence belongs to the universal ribosomal protein uS13 family. In terms of assembly, part of the 30S ribosomal subunit. Forms a loose heterodimer with protein S19. Forms two bridges to the 50S subunit in the 70S ribosome.

Located at the top of the head of the 30S subunit, it contacts several helices of the 16S rRNA. In the 70S ribosome it contacts the 23S rRNA (bridge B1a) and protein L5 of the 50S subunit (bridge B1b), connecting the 2 subunits; these bridges are implicated in subunit movement. Contacts the tRNAs in the A and P-sites. The polypeptide is Small ribosomal subunit protein uS13 (Crocosphaera subtropica (strain ATCC 51142 / BH68) (Cyanothece sp. (strain ATCC 51142))).